The primary structure comprises 537 residues: Cytochrome P450 734A5 (537 aa).

A helical transmembrane segment spans residues 13–33; it reads GAAAVAVAAAAAWVAVYAAAA. Cys480 lines the heme pocket.

The protein belongs to the cytochrome P450 family. Heme is required as a cofactor. In terms of tissue distribution, exclusively expressed in roots.

The protein resides in the membrane. Cytochrome P450 probably involved in brassinosteroids (BRs) inactivation and regulation of BRs homeostasis. The polypeptide is Cytochrome P450 734A5 (CYP734A5) (Oryza sativa subsp. japonica (Rice)).